The sequence spans 272 residues: Small ribosomal subunit protein uS2 (272 aa).

Residues 244 to 272 (EDDYEGAEGDLDLDSANEEESLEDNNEEE) are disordered.

The protein belongs to the universal ribosomal protein uS2 family.

This chain is Small ribosomal subunit protein uS2, found in Trichodesmium erythraeum (strain IMS101).